A 506-amino-acid polypeptide reads, in one-letter code: BTB/POZ domain and ankyrin repeat-containing protein NPR5 (506 aa).

The 109-residue stretch at 23–131 (SDVTFSVEGR…LYSGQVSLVP (109 aa)) folds into the BTB domain. The segment at 137 to 151 (RPGCGERGCWHTHCA) adopts a C2HC NPR-type zinc-finger fold. Cys-140, Cys-145, His-147, and Cys-150 together coordinate Zn(2+). ANK repeat units lie at residues 278 to 306 (HKIR…GLNL), 307 to 337 (DDAL…DVNH), 342 to 371 (AGKT…DPNV), and 375 to 409 (DGVT…KLRL). A disordered region spans residues 481 to 506 (KMNDGGDGDDGGSRGPSSLFSPHGFP).

This sequence belongs to the plant 'ANKYRIN-BTB/POZ' family. 'NOOT-BOP-COCH-like' (NBCL) subfamily. As to quaternary structure, homodimer. Interacts with TGAL5, TGAL7, TGAL8 and TGAL11.

The protein resides in the nucleus. It is found in the cytoplasm. It participates in protein modification; protein ubiquitination. Its function is as follows. May act as a substrate-specific adapter of an E3 ubiquitin-protein ligase complex (CUL3-RBX1-BTB) which mediates the ubiquitination and subsequent proteasomal degradation of target proteins. Transcriptional co-regulator involved in the promotion of leaf and floral meristem fate and determinacy. Required for the abscission of senescent organs, probably by regulating the cell wall disorganization in abscission zones (AZs, e.g. pulvini at the base of leaves). Maybe involved in defense response against pathogens. This chain is BTB/POZ domain and ankyrin repeat-containing protein NPR5, found in Oryza sativa subsp. japonica (Rice).